The sequence spans 291 residues: MIPYPTVEDASVALGRNLTWFETVWFDYSATKSNFHVYCHTILVLFLVFSLAPFPLVIVEWTGWFDQFKIQKKVKYSLSDMFQCYKEVMKLFLLVVGTLQIVSYPSIQMVGIRSGLPLPSLMEIVAQLVVYFLIEDYTNYWIHRWMHCKWGYEKIHRIHHEYTSPIGYASPYAHWAEILILGIPTFLGPAIAPGHIMTFWLWISLRQFEAIETHSGYDFPWSVTKLIPFYGGPEYHDYHHYVGGQSQSNFASVFTYCDYIYGTDKGYRIHKKLLHHQIKEEAEEKRVRKHD.

A run of 3 helical transmembrane segments spans residues 41-61 (TILV…IVEW), 92-112 (FLLV…MVGI), and 114-134 (SGLP…YFLI). The Fatty acid hydroxylase domain occupies 128–263 (LVVYFLIEDY…FTYCDYIYGT (136 aa)). The short motif at 143–147 (HRWMH) is the Histidine box-1 element. The short motif at 156-160 (HRIHH) is the Histidine box-2 element. A helical membrane pass occupies residues 178 to 198 (ILILGIPTFLGPAIAPGHIMT). The short motif at 235-241 (YHDYHHY) is the Histidine box-3 element.

Belongs to the sterol desaturase family. Interacts with ACBP1. It depends on Fe cation as a cofactor. In terms of tissue distribution, expressed at low levels in leaves, roots, siliques and flowers.

It localises to the endoplasmic reticulum membrane. The catalysed reaction is 4,4-dimethyl-5alpha-cholest-7-en-3beta-ol + 6 Fe(II)-[cytochrome b5] + 3 O2 + 5 H(+) = 4alpha-carboxy-4beta-methyl-5alpha-cholest-7-ene-3beta-ol + 6 Fe(III)-[cytochrome b5] + 4 H2O. It catalyses the reaction 24-methylidenelophenol + 6 Fe(II)-[cytochrome b5] + 3 O2 + 5 H(+) = 4alpha-carboxy-ergosta-7,24(24(1))-dien-3beta-ol + 6 Fe(III)-[cytochrome b5] + 4 H2O. Its function is as follows. Non-heme iron oxygenase involved in sterols biosynthesis by catalyzing the removal of the first methyl group at the C-4 position. 4,4-dimethyl-9-beta,19-cyclopropylsterols such as 24-methylenecycloartanol are the preferred substrates. This Arabidopsis thaliana (Mouse-ear cress) protein is Methylsterol monooxygenase 1-3.